The sequence spans 335 residues: Beta-ketoacyl-[acyl-carrier-protein] synthase III 1 (335 aa).

Residues Cys-116 and His-256 contribute to the active site. The tract at residues 257–261 is ACP-binding; that stretch reads QANQR. Asn-286 is a catalytic residue.

This sequence belongs to the thiolase-like superfamily. FabH family. Homodimer.

The protein localises to the cytoplasm. The enzyme catalyses malonyl-[ACP] + acetyl-CoA + H(+) = 3-oxobutanoyl-[ACP] + CO2 + CoA. The protein operates within lipid metabolism; fatty acid biosynthesis. Its function is as follows. Catalyzes the condensation reaction of fatty acid synthesis by the addition to an acyl acceptor of two carbons from malonyl-ACP. Catalyzes the first condensation reaction which initiates fatty acid synthesis and may therefore play a role in governing the total rate of fatty acid production. Possesses both acetoacetyl-ACP synthase and acetyl transacylase activities. Its substrate specificity determines the biosynthesis of branched-chain and/or straight-chain of fatty acids. The polypeptide is Beta-ketoacyl-[acyl-carrier-protein] synthase III 1 (Bacteroides thetaiotaomicron (strain ATCC 29148 / DSM 2079 / JCM 5827 / CCUG 10774 / NCTC 10582 / VPI-5482 / E50)).